Reading from the N-terminus, the 383-residue chain is Ovalbumin (383 aa).

The residue at position 2 (glycine 2) is an N-acetylglycine. The not cleaved signal peptide spans 22–48 (HHANDNMLYSPFAILSTLAMVFLGAKD). Position 69 is a phosphoserine (serine 69). Cysteine 74 and cysteine 121 form a disulfide bridge. Asparagine 293 and asparagine 312 each carry an N-linked (GlcNAc...) asparagine glycan. A Phosphoserine modification is found at serine 345.

Belongs to the serpin family. Ov-serpin subfamily. The signal sequence is not cleaved. The functional signal for membrane translocation of ovalbumin becomes accessible when the nascent chain is 50 to 60 residues long. The hydrophobic sequence which lies between residues 27 and 43 folds back on the preceding residues to form an amphipathic hairpin structure which is the signal element recognized by the membrane. In terms of tissue distribution, major protein of egg white.

It is found in the secreted. Functionally, storage protein of egg white. Lack protease inhibitory activity. The sequence is that of Ovalbumin (SERPINB14) from Coturnix japonica (Japanese quail).